Consider the following 263-residue polypeptide: tRNA pseudouridine synthase A (263 aa).

D51 serves as the catalytic Nucleophile. Substrate is bound at residue Y106.

This sequence belongs to the tRNA pseudouridine synthase TruA family.

The catalysed reaction is uridine(38/39/40) in tRNA = pseudouridine(38/39/40) in tRNA. Functionally, formation of pseudouridine at positions 38, 39 and 40 in the anticodon stem and loop of transfer RNAs. In Pyrococcus abyssi (strain GE5 / Orsay), this protein is tRNA pseudouridine synthase A.